A 489-amino-acid chain; its full sequence is Adenylosuccinate synthetase 2, chloroplastic (489 aa).

A chloroplast-targeting transit peptide spans 1–54 (MPLASLSLDPAPFPLIRPAAGWSGRVLPVPGPAPRLCRPLRAAPVAPATTDEPS). GTP is bound by residues 76–82 (GDEGKGK) and 104–106 (GHT). The active-site Proton acceptor is the Asp77. Residues Asp77 and Gly104 each contribute to the Mg(2+) site. IMP is bound by residues 77–80 (DEGK), 102–105 (NAGH), Thr194, Arg208, Gln288, Thr303, and Arg367. His105 functions as the Proton donor in the catalytic mechanism. Residue 363 to 369 (TTTGRPR) participates in substrate binding. Residues Arg369, 395 to 397 (KLD), and 478 to 480 (GVG) contribute to the GTP site.

Belongs to the adenylosuccinate synthetase family. In terms of assembly, homodimer. It depends on Mg(2+) as a cofactor.

It localises to the plastid. Its subcellular location is the chloroplast. The enzyme catalyses IMP + L-aspartate + GTP = N(6)-(1,2-dicarboxyethyl)-AMP + GDP + phosphate + 2 H(+). It participates in purine metabolism; AMP biosynthesis via de novo pathway; AMP from IMP: step 1/2. Plays an important role in the de novo pathway and in the salvage pathway of purine nucleotide biosynthesis. Catalyzes the first committed step in the biosynthesis of AMP from IMP. This is Adenylosuccinate synthetase 2, chloroplastic from Sorghum bicolor (Sorghum).